The primary structure comprises 166 residues: PTS system glucose-specific EIIA component (166 aa).

A PTS EIIA type-1 domain is found at 34–138; the sequence is DPVFAQKMMG…SVISPIIITN (105 aa). 2 residues coordinate Zn(2+): His71 and His86. The Tele-phosphohistidine intermediate; for EIIA activity role is filled by His86. His86 is subject to Phosphohistidine; by HPr.

In terms of assembly, heterodimer with glycerol kinase (glpk). The cofactor is Zn(2+).

It localises to the cytoplasm. In terms of biological role, the phosphoenolpyruvate-dependent sugar phosphotransferase system (sugar PTS), a major carbohydrate active transport system, catalyzes the phosphorylation of incoming sugar substrates concomitantly with their translocation across the cell membrane. The enzyme II complex composed of PtsG and Crr is involved in glucose transport. This is PTS system glucose-specific EIIA component (crr) from Staphylococcus aureus (strain COL).